Here is a 259-residue protein sequence, read N- to C-terminus: Dickkopf-related protein 2 (259 aa).

An N-terminal signal peptide occupies residues 1–33 (MAALMRSKDSSCCLLLLAAVLMVESSQIGSSRA). Residue Asn-52 is glycosylated (N-linked (GlcNAc...) asparagine). Residues 78 to 127 (CSSDKECEVGRYCHSPHQGSSACMVCRRKKKRCHRDGMCCPSTRCNNGIC) form a DKK-type Cys-1 region. 5 cysteine pairs are disulfide-bonded: Cys-183–Cys-195, Cys-189–Cys-204, Cys-194–Cys-231, Cys-214–Cys-239, and Cys-233–Cys-256. Positions 183-256 (CLRSSDCIEG…YSSKARLHVC (74 aa)) are DKK-type Cys-2.

This sequence belongs to the dickkopf family. In terms of assembly, interacts with LRP5 and LRP6. May be proteolytically processed by a furin-like protease. In terms of tissue distribution, expressed in heart, brain, skeletal muscle and lung.

The protein localises to the secreted. In terms of biological role, antagonizes canonical Wnt signaling by inhibiting LRP5/6 interaction with Wnt and by forming a ternary complex with the transmembrane protein KREMEN that promotes internalization of LRP5/6. DKKs play an important role in vertebrate development, where they locally inhibit Wnt regulated processes such as antero-posterior axial patterning, limb development, somitogenesis and eye formation. In the adult, Dkks are implicated in bone formation and bone disease, cancer and Alzheimer disease. The chain is Dickkopf-related protein 2 (DKK2) from Homo sapiens (Human).